Here is a 335-residue protein sequence, read N- to C-terminus: Phosphatidylinositol:ceramide inositolphosphotransferase (335 aa).

The Cytoplasmic segment spans residues 1–21 (MVLMGPHSALRLLPLKTQAIR). Residues 22–42 (FVLLLLLSVLILAVALLVTNA) form a helical membrane-spanning segment. Residues 43–72 (RMPDPKVVRPLPDIGFEVFPKVGWLEHLTD) are Extracellular-facing. The chain crosses the membrane as a helical span at residues 73–93 (VCIFILNFLSLLVVFKLYLLH). Over 94 to 98 (RQNEG) the chain is Cytoplasmic. Residues 99–119 (LDELQPFSCCPLIGKIIFGVW) traverse the membrane as a helical segment. Topologically, residues 120–139 (DSGRQSGIEKRDAHLIAWIR) are extracellular. A helical membrane pass occupies residues 140–160 (YFTTYFIVLLFRAIVVVMTSY). The Cytoplasmic segment spans residues 161–179 (PATDNHCQNPMKITNPVKN). A helical membrane pass occupies residues 180-200 (VIMTLVTFGSGSIHCGDLMFS). At 201-203 (GHT) the chain is on the extracellular side. Residue histidine 202 is part of the active site. A helical transmembrane segment spans residues 204–224 (VSITLSLLVQWIYGSMLHWVF). Residues 225–335 (RPASVLLVLL…GPACGNFGHW (111 aa)) lie on the Cytoplasmic side of the membrane. Catalysis depends on residues histidine 245 and aspartate 249.

Belongs to the sphingomyelin synthase family.

It localises to the membrane. Bidirectional lipid inositolphosphotransferase capable of converting phosphatidylinositol (PI) and ceramide to inositol-phosphorylceramide (IPC) and diacylglycerol (DAG) and vice versa. Direction is dependent on the relative concentrations of DAG and ceramide as phosphoinositol acceptors. Essential for viability of the pathogenic bloodstream stage of this human protozoan parasite and, consequently, can be considered as potential drug target. The sequence is that of Phosphatidylinositol:ceramide inositolphosphotransferase from Trypanosoma cruzi (strain CL Brener).